We begin with the raw amino-acid sequence, 649 residues long: Endoglucanase D (649 aa).

An N-terminal signal peptide occupies residues 1-41 (MSRMTLKSSMKKRVLSLLIAVVFLSLTGVFPSGLIETKVSA). The active-site Nucleophile is the aspartate 201. Active-site residues include histidine 516 and aspartate 546. Catalysis depends on glutamate 555, which acts as the Proton donor. In terms of domain architecture, Dockerin spans 579–649 (NEVLYGDVND…LIRVIEKLPI (71 aa)).

This sequence belongs to the glycosyl hydrolase 9 (cellulase E) family. Requires Ca(2+) as cofactor.

It catalyses the reaction Endohydrolysis of (1-&gt;4)-beta-D-glucosidic linkages in cellulose, lichenin and cereal beta-D-glucans.. Its function is as follows. This enzyme catalyzes the endohydrolysis of 1,4-beta-glucosidic linkages in cellulose, lichenin and cereal beta-D-glucans. The protein is Endoglucanase D (celD) of Acetivibrio thermocellus (strain ATCC 27405 / DSM 1237 / JCM 9322 / NBRC 103400 / NCIMB 10682 / NRRL B-4536 / VPI 7372) (Clostridium thermocellum).